The following is a 184-amino-acid chain: Adenine phosphoribosyltransferase (184 aa).

Belongs to the purine/pyrimidine phosphoribosyltransferase family. Homodimer.

It localises to the cytoplasm. The catalysed reaction is AMP + diphosphate = 5-phospho-alpha-D-ribose 1-diphosphate + adenine. Its pathway is purine metabolism; AMP biosynthesis via salvage pathway; AMP from adenine: step 1/1. Catalyzes a salvage reaction resulting in the formation of AMP, that is energically less costly than de novo synthesis. The chain is Adenine phosphoribosyltransferase from Myxococcus xanthus (strain DK1622).